The chain runs to 302 residues: Gamma-gliadin (302 aa).

Positions 1 to 19 (MKTLLILTILAMATTIATA) are cleaved as a signal peptide. A disordered region spans residues 27–159 (GQVQWPQQQP…QSFPQQQQPA (133 aa)). A compositionally biased stretch (low complexity) spans 42-102 (QPFCQQPQRT…PQPQQTFPQQ (61 aa)). The segment covering 103–124 (PQLPFPQQPQQPFPQPQQPQQP) has biased composition (pro residues). Positions 125-159 (FPQSQQPQQPFPQPQQQFPQPQQPQQSFPQQQQPA) are enriched in low complexity.

It belongs to the gliadin/glutenin family.

Gliadin is the major seed storage protein in wheat. The sequence is that of Gamma-gliadin from Triticum aestivum (Wheat).